A 460-amino-acid polypeptide reads, in one-letter code: Dynactin subunit 4 (460 aa).

The residue at position 2 (Ala2) is an N-acetylalanine. A coiled-coil region spans residues Gln152–Asn172. A Phosphoserine modification is found at Ser196. Lys215 participates in a covalent cross-link: Glycyl lysine isopeptide (Lys-Gly) (interchain with G-Cter in SUMO2). Residue Thr407 is modified to Phosphothreonine.

Belongs to the dynactin subunit 4 family. Subunit of dynactin, a multiprotein complex part of a tripartite complex with dynein and a adapter, such as BICDL1, BICD2 or HOOK3. The dynactin complex is built around ACTR1A/ACTB filament and consists of an actin-related filament composed of a shoulder domain, a pointed end and a barbed end. Its length is defined by its flexible shoulder domain. The soulder is composed of 2 DCTN1 subunits, 4 DCTN2 and 2 DCTN3. The 4 DCNT2 (via N-terminus) bind the ACTR1A filament and act as molecular rulers to determine the length. The pointed end is important for binding dynein-dynactin cargo adapters. Consists of 4 subunits: ACTR10, DCNT4, DCTN5 and DCTN6. The barbed end is composed of a CAPZA1:CAPZB heterodimers, which binds ACTR1A/ACTB filament and dynactin and stabilizes dynactin. Interacts with ATP7B, but not ATP7A, in a copper-dependent manner. Interacts with ANK2; this interaction is required for localization at costameres. Interacts with N4BP2L1.

It localises to the cytoplasm. It is found in the cytoskeleton. The protein resides in the microtubule organizing center. Its subcellular location is the centrosome. The protein localises to the stress fiber. It localises to the cell cortex. It is found in the myofibril. The protein resides in the sarcomere. In terms of biological role, part of the dynactin complex that activates the molecular motor dynein for ultra-processive transport along microtubules. The chain is Dynactin subunit 4 (DCTN4) from Pongo abelii (Sumatran orangutan).